A 271-amino-acid chain; its full sequence is Transcription factor PU.1 (271 aa).

A disordered region spans residues 124–164; it reads LSPAHQQSSDEEEGERQSPPLEVSDGEADGLEPGPGLLHGE. Residues serine 141 and serine 147 each carry the phosphoserine modification. The span at 154 to 164 shows a compositional bias: low complexity; it reads LEPGPGLLHGE. The ETS DNA-binding region spans 171–254; the sequence is IRLYQFLLDL…VKKKLTYQFS (84 aa). DNA is bound by residues lysine 218, arginine 231, arginine 234, and lysine 244.

This sequence belongs to the ETS family. As to quaternary structure, binds DNA as a monomer. Can form homomers. Directly interacts with CEBPD/NF-IL6-beta; this interaction does not affect DNA-binding properties of each partner. Interacts with NONO/p54(nrb). Interacts with RUNX1/AML1. Interacts with GFI1; the interaction represses SPI1 transcriptional activity, hence blocks SPI1-induced macrophage differentiation of myeloid progenitor cells. Interacts with CEBPE. Interacts with IRF4/Pip and IRF8. Interacts with JUN. Interacts with RB1. Interacts with TBP.

It localises to the nucleus. Its activity is regulated as follows. Transcriptional activity at macrophage-specific genes is inhibited by interaction with GFI1, which results in the inhibition of SPI1-induced macrophage differentiation of myeloid progenitor cells, but not that of the granulocyte lineage. In terms of biological role, pioneer transcription factor, which controls hematopoietic cell fate by decompacting stem cell heterochromatin and allowing other transcription factors to enter otherwise inaccessible genomic sites. Once in open chromatin, can directly control gene expression by binding genetic regulatory elements and can also more broadly influence transcription by recruiting transcription factors, such as interferon regulatory factors (IRFs), to otherwise inaccessible genomic regions. Transcriptionally activates genes important for myeloid and lymphoid lineages, such as CSF1R or FCER1A. Transcriptional activation from certain promoters, possibly containing low affinity binding sites, is achieved cooperatively with other transcription factors. FCER1A transactivation is achieved in cooperation with GATA1. May be particularly important for the pro- to pre-B cell transition. Binds (via the ETS domain) onto the purine-rich DNA core sequence 5'-GAGGAA-3', also known as the PU-box. In vitro can bind RNA and interfere with pre-mRNA splicing. The chain is Transcription factor PU.1 (Spi1) from Rattus norvegicus (Rat).